Here is a 195-residue protein sequence, read N- to C-terminus: Phosphoheptose isomerase (195 aa).

The 161-residue stretch at 35-195 folds into the SIS domain; it reads IVSKILQAGN…IVEYNLFKME (161 aa). 51 to 53 lines the substrate pocket; that stretch reads NGG. H60 and E64 together coordinate Zn(2+). Substrate is bound by residues E64, 95–96, 121–123, S126, and Q173; these read ND and STS. Q173 and H181 together coordinate Zn(2+).

This sequence belongs to the SIS family. GmhA subfamily. Zn(2+) is required as a cofactor.

The protein resides in the cytoplasm. It carries out the reaction 2 D-sedoheptulose 7-phosphate = D-glycero-alpha-D-manno-heptose 7-phosphate + D-glycero-beta-D-manno-heptose 7-phosphate. It participates in carbohydrate biosynthesis; D-glycero-D-manno-heptose 7-phosphate biosynthesis; D-glycero-alpha-D-manno-heptose 7-phosphate and D-glycero-beta-D-manno-heptose 7-phosphate from sedoheptulose 7-phosphate: step 1/1. Functionally, catalyzes the isomerization of sedoheptulose 7-phosphate in D-glycero-D-manno-heptose 7-phosphate. This is Phosphoheptose isomerase from Leptospira interrogans serogroup Icterohaemorrhagiae serovar copenhageni (strain Fiocruz L1-130).